A 156-amino-acid polypeptide reads, in one-letter code: MLQPEGLYALEEGTALTASRNDCIICYSAYDLSVHLPRRLYCGHTFCQACMQRLDMPAHEQHWIPCPQCRQSTPVPRGGVTMLDLDLAAFLAVKAEREPSKIEPRSSVPLKISTTITQQPAGLYPTLGPQPHFPQPGCCCWGWGRLCWYPPGNPEV.

Residues 23 to 70 form an RING-type zinc finger; it reads CIICYSAYDLSVHLPRRLYCGHTFCQACMQRLDMPAHEQHWIPCPQCR.

The chain is RING finger protein 224 (Rnf224) from Mus musculus (Mouse).